Consider the following 231-residue polypeptide: NADH-ubiquinone oxidoreductase chain 4 (231 aa).

A run of 6 helical transmembrane segments spans residues 1 to 21, 34 to 54, 61 to 80, 84 to 106, 118 to 138, and 169 to 189; these read PIAG…YGII, VFLP…LTCL, SLIA…AIMI, WGLS…LFCL, ILIL…WWLL, and TIIL…HMFL.

It belongs to the complex I subunit 4 family.

The protein resides in the mitochondrion membrane. It carries out the reaction a ubiquinone + NADH + 5 H(+)(in) = a ubiquinol + NAD(+) + 4 H(+)(out). Core subunit of the mitochondrial membrane respiratory chain NADH dehydrogenase (Complex I) that is believed to belong to the minimal assembly required for catalysis. Complex I functions in the transfer of electrons from NADH to the respiratory chain. The immediate electron acceptor for the enzyme is believed to be ubiquinone. The chain is NADH-ubiquinone oxidoreductase chain 4 (MT-ND4) from Porthidium nasutum (Hognosed pitviper).